Reading from the N-terminus, the 236-residue chain is uncharacterized protein (236 aa).

The tract at residues 217 to 236 (GESPDNVVRGEGGFGSTGGH) is disordered. Residues 226-236 (GEGGFGSTGGH) are compositionally biased toward gly residues.

This is an uncharacterized protein from Ostreid herpesvirus 1 (isolate France) (OsHV-1).